Here is a 318-residue protein sequence, read N- to C-terminus: Aldo-keto reductase family 1 member C21 (318 aa).

20–24 is an NADP(+) binding site; the sequence is GFGTA. K31 is a substrate binding site. D50 is a binding site for NADP(+). Y55 (proton donor) is an active-site residue. Residue H117 coordinates substrate. NADP(+) is bound by residues 166 to 167, Q190, 216 to 224, and 270 to 280; these read SN, YGVLGTQRY, and TSLKEERIKEN.

Belongs to the aldo/keto reductase family. In terms of assembly, monomer.

The protein localises to the cytoplasm. The enzyme catalyses androsterone + NADP(+) = 5alpha-androstan-3,17-dione + NADPH + H(+). The catalysed reaction is androsterone + NAD(+) = 5alpha-androstan-3,17-dione + NADH + H(+). Its function is as follows. NADP-dependent 17-alpha-hydroxysteroid dehydrogenase that converts 5-alpha-androstane-3,17-dione into androsterone. Has lower 3-alpha-hydroxysteroid dehydrogenase activity. Has broad substrate specificity and acts on various 17-alpha-hydroxysteroids, 17-ketosteroids, 3-alpha hydroxysteroids and 3-ketosteroids. Reduction of keto groups is strictly stereoselective. Reduction of 17-ketosteroids yields only 17-alpha-hydroxysteroids. Likewise, reduction of 3-ketosteroids yields only 3-alpha-hydroxysteroids. In Rattus norvegicus (Rat), this protein is Aldo-keto reductase family 1 member C21 (Akr1c21).